A 500-amino-acid polypeptide reads, in one-letter code: Ephrin type-B receptor 3 (500 aa).

A Fibronectin type-III domain is found at 1 to 64 (PLLVLDLIIQ…NPVDFSTSLY (64 aa)). At 1-113 (PLLVLDLIIQ…ERSVQDLLPL (113 aa)) the chain is on the extracellular side. The disordered stretch occupies residues 76-103 (HLRRREELTTTTTGLKSREERFQKSDDP). Basic and acidic residues predominate over residues 91 to 103 (KSREERFQKSDDP). A helical membrane pass occupies residues 114 to 134 (IVGSASAGFVVILAMIVIAVV). Residues 135–500 (CLRRQRTGSE…QMSQTLPIRV (366 aa)) are Cytoplasmic-facing. Y168 is subject to Phosphotyrosine; by autocatalysis. Positions 187 to 450 (VKIEEVIGAG…QIVSTLDKFL (264 aa)) constitute a Protein kinase domain. ATP contacts are provided by residues 193 to 201 (IGAGEFGEV) and K219. The active-site Proton acceptor is D312. Residues 421–500 (LHQLMLECWV…QMSQTLPIRV (80 aa)) enclose the SAM domain. The PDZ-binding motif lies at 498–500 (IRV).

The protein belongs to the protein kinase superfamily. Tyr protein kinase family. Ephrin receptor subfamily. Heterotetramer upon binding of the ligand. The heterotetramer is composed of an ephrin dimer and a receptor dimer. Oligomerization is probably required to induce biological responses. In terms of processing, phosphorylated. Autophosphorylates upon ligand-binding. Autophosphorylation on Tyr-168 is required for interaction with SH2 domain-containing proteins. As to expression, widely expressed in the developing nervous system.

It is found in the cell membrane. The protein resides in the cell projection. Its subcellular location is the dendrite. It carries out the reaction L-tyrosyl-[protein] + ATP = O-phospho-L-tyrosyl-[protein] + ADP + H(+). Its function is as follows. Receptor tyrosine kinase which binds promiscuously transmembrane ephrin-B family ligands residing on adjacent cells, leading to contact-dependent bidirectional signaling into neighboring cells. The signaling pathway downstream of the receptor is referred to as forward signaling while the signaling pathway downstream of the ephrin ligand is referred to as reverse signaling. Generally has an overlapping and redundant function with EPHB2. Like EPHB2, functions in axon guidance during development. In addition to its role in axon guidance also plays an important redundant role with other ephrin-B receptors in development and maturation of dendritic spines and the formation of excitatory synapses. May control other aspects of development through regulation of cell migration and positioning. May play a role in early pattern formation within the developing nervous system. This Danio rerio (Zebrafish) protein is Ephrin type-B receptor 3 (ephb3).